Here is a 185-residue protein sequence, read N- to C-terminus: Elongation factor P (185 aa).

Belongs to the elongation factor P family.

The protein localises to the cytoplasm. The protein operates within protein biosynthesis; polypeptide chain elongation. Involved in peptide bond synthesis. Stimulates efficient translation and peptide-bond synthesis on native or reconstituted 70S ribosomes in vitro. Probably functions indirectly by altering the affinity of the ribosome for aminoacyl-tRNA, thus increasing their reactivity as acceptors for peptidyl transferase. The chain is Elongation factor P from Caldicellulosiruptor saccharolyticus (strain ATCC 43494 / DSM 8903 / Tp8T 6331).